Here is a 352-residue protein sequence, read N- to C-terminus: C-X-C chemokine receptor type 4 (352 aa).

An important for chemokine binding and signaling region spans residues 1–21 (MEGISIYTSDNYTEEMGSGDY). At 1–38 (MEGISIYTSDNYTEEMGSGDYDSIKEPCFREKNAHFNR) the chain is on the extracellular side. Y7 bears the Sulfotyrosine mark. N11 carries N-linked (GlcNAc...) asparagine glycosylation. Y12 carries the sulfotyrosine modification. The O-linked (Xyl...) (chondroitin sulfate) serine glycan is linked to S18. The residue at position 21 (Y21) is a Sulfotyrosine. 2 disulfide bridges follow: C28–C274 and C109–C186. The chain crosses the membrane as a helical span at residues 39 to 63 (IFLPTIYSIIFLTGIVGNGLVILVM). The Cytoplasmic segment spans residues 64 to 77 (GYQKKLRSMTDKYR). Residues 78–99 (LHLSVADLLFVITLPFWAVDAV) traverse the membrane as a helical segment. The interval 94-97 (WAVD) is chemokine binding. Topologically, residues 100-110 (ANWYFGNFLCK) are extracellular. The chain crosses the membrane as a helical span at residues 111–130 (AVHVIYTVNLYSSVLILAFI). The chemokine binding stretch occupies residues 113-117 (HVIYT). Over 131 to 154 (SLDRYLAIVHATNSQKPRKLLAEK) the chain is Cytoplasmic. An Important for signaling motif is present at residues 133-135 (DRY). The segment at 135-147 (YLAIVHATNSQKP) is involved in dimerization; when bound to chemokine. The chain crosses the membrane as a helical span at residues 155–174 (VVYVGVWIPALLLTIPGFIF). Residues 175–195 (ASVSEADDRFICDRFYPNDLW) lie on the Extracellular side of the membrane. The interval 186 to 190 (CDRFY) is chemokine binding, important for signaling. An involved in dimerization region spans residues 191 to 210 (PNDLWVVVFQFQHIMVGLIL). Residues 196–216 (VVVFQFQHIMVGLILPGIVIL) form a helical membrane-spanning segment. Residues 217-241 (SCYCIIISKLSHSKGHQKRKALKTT) are Cytoplasmic-facing. Residues 242–261 (VILILAFFACWLPYYIGISI) form a helical membrane-spanning segment. The Extracellular segment spans residues 262–282 (DSFILLEIIKQGCEFENTVHK). The involved in dimerization stretch occupies residues 266-268 (LLE). The helical transmembrane segment at 283–302 (WISITEALAFFHCCLNPILY) threads the bilayer. Residues 303-352 (AFLGAKFKTSAQHALTSVSRGSSLKILSKGKRGGHSSVSTESESSSFHSS) lie on the Cytoplasmic side of the membrane. Phosphoserine occurs at positions 319 and 321. S324 and S325 each carry phosphoserine; by PKC and GRK6. Residues 329–352 (LSKGKRGGHSSVSTESESSSFHSS) are disordered. S330 carries the post-translational modification Phosphoserine; by GRK6. A Glycyl lysine isopeptide (Lys-Gly) (interchain with G-Cter in ubiquitin) cross-link involves residue K331. Residues 337–352 (HSSVSTESESSSFHSS) show a composition bias toward low complexity. S339 is subject to Phosphoserine; by GRK6. S348 and S351 each carry phosphoserine.

The protein belongs to the G-protein coupled receptor 1 family. As to quaternary structure, monomer. Can form homodimers. Interacts with CD164. Interacts with ARRB2; the interaction is dependent on the C-terminal phosphorylation of CXCR4 and allows activation of MAPK1 and MAPK3. Interacts with ARR3; the interaction is dependent on the C-terminal phosphorylation of CXCR4 and modulates calcium mobilization. Interacts with RNF113A; the interaction, enhanced by CXCL12, promotes CXCR4 ubiquitination and subsequent degradation. Interacts (via the cytoplasmic C-terminal) with ITCH (via the WW domains I and II); the interaction, enhanced by CXCL12, promotes CXCR4 ubiquitination and leads to its degradation. Interacts with extracellular ubiquitin. Interacts with DBN1; this interaction is enhanced by antigenic stimulation. Following LPS binding, may form a complex with GDF5, HSP90AA1 and HSPA8. Phosphorylated on agonist stimulation. Rapidly phosphorylated on serine and threonine residues in the C-terminal. Phosphorylation at Ser-324 and Ser-325 leads to recruitment of ITCH, ubiquitination and protein degradation. In terms of processing, ubiquitinated after ligand binding, leading to its degradation. Ubiquitinated by ITCH at the cell membrane on agonist stimulation. The ubiquitin-dependent mechanism, endosomal sorting complex required for transport (ESCRT), then targets CXCR4 for lysosomal degradation. This process is dependent also on prior Ser-/Thr-phosphorylation in the C-terminal of CXCR4. Also binding of ARRB1 to STAM negatively regulates CXCR4 sorting to lysosomes though modulating ubiquitination of SFR5S. Post-translationally, sulfation is required for efficient binding of CXCL12/SDF-1alpha and promotes its dimerization. O- and N-glycosylated. N-glycosylation can mask coreceptor function. The O-glycosylation chondroitin sulfate attachment does not affect interaction with CXCL12/SDF-1alpha nor its coreceptor activity.

It is found in the cell membrane. It localises to the cell junction. The protein resides in the early endosome. Its subcellular location is the late endosome. The protein localises to the lysosome. Its function is as follows. Receptor for the C-X-C chemokine CXCL12/SDF-1 that transduces a signal by increasing intracellular calcium ion levels and enhancing MAPK1/MAPK3 activation. Involved in the AKT signaling cascade. Plays a role in regulation of cell migration, e.g. during wound healing. Acts as a receptor for extracellular ubiquitin; leading to enhanced intracellular calcium ions and reduced cellular cAMP levels. Binds bacterial lipopolysaccharide (LPS) et mediates LPS-induced inflammatory response, including TNF secretion by monocytes. Involved in hematopoiesis and in cardiac ventricular septum formation. Also plays an essential role in vascularization of the gastrointestinal tract, probably by regulating vascular branching and/or remodeling processes in endothelial cells. Involved in cerebellar development. In the CNS, could mediate hippocampal-neuron survival. The polypeptide is C-X-C chemokine receptor type 4 (CXCR4) (Cercocebus atys (Sooty mangabey)).